Reading from the N-terminus, the 381-residue chain is Cobalt-precorrin-5B C(1)-methyltransferase (381 aa).

Belongs to the CbiD family.

It catalyses the reaction Co-precorrin-5B + S-adenosyl-L-methionine = Co-precorrin-6A + S-adenosyl-L-homocysteine. It functions in the pathway cofactor biosynthesis; adenosylcobalamin biosynthesis; cob(II)yrinate a,c-diamide from sirohydrochlorin (anaerobic route): step 6/10. Its function is as follows. Catalyzes the methylation of C-1 in cobalt-precorrin-5B to form cobalt-precorrin-6A. In Prochlorococcus marinus (strain SARG / CCMP1375 / SS120), this protein is Cobalt-precorrin-5B C(1)-methyltransferase.